The chain runs to 133 residues: Norrin (133 aa).

Positions 1-24 (MRKHVLAASFSMLSLLVIMGDTDS) are cleaved as a signal peptide. Cystine bridges form between Cys39–Cys96, Cys55–Cys110, Cys65–Cys126, and Cys69–Cys128. Positions 39-132 (CMRHHYVDSI…ILSCHCEECN (94 aa)) constitute a CTCK domain.

As to quaternary structure, homodimer; disulfide-linked. Component of a complex, at least composed of TSPAN12, FZD4, LRP5/6 and norrin (NDP). Binds FZD4 with high affinity. Interacts with LRP6 (via Beta-propellers 1 and 2). In terms of tissue distribution, expressed in the outer nuclear, inner nuclear and ganglion cell layers of the retina, and in fetal and adult brain.

Its subcellular location is the secreted. In terms of biological role, activates the canonical Wnt signaling pathway through FZD4 and LRP5 coreceptor. Plays a central role in retinal vascularization by acting as a ligand for FZD4 that signals via stabilizing beta-catenin (CTNNB1) and activating LEF/TCF-mediated transcriptional programs. Acts in concert with TSPAN12 to activate FZD4 independently of the Wnt-dependent activation of FZD4, suggesting the existence of a Wnt-independent signaling that also promote accumulation the beta-catenin (CTNNB1). May be involved in a pathway that regulates neural cell differentiation and proliferation. Possible role in neuroectodermal cell-cell interaction. This Homo sapiens (Human) protein is Norrin (NDP).